Here is a 941-residue protein sequence, read N- to C-terminus: ATP-dependent 6-phosphofructokinase subunit beta (941 aa).

Residues 2–558 (PDASLFNGTS…HMKNFISTNS (557 aa)) are N-terminal catalytic PFK domain 1. ATP contacts are provided by residues glycine 191, 255–256 (RC), and 285–288 (GDGS). Position 286 (aspartate 286) interacts with Mg(2+). Residues 331-333 (SID), arginine 368, and 375-377 (MGR) contribute to the beta-D-fructose 6-phosphate site. Residue aspartate 333 is the Proton acceptor of the active site. ATP is bound by residues isoleucine 395, 400–405 (KPASSR), and glutamine 410. Beta-D-fructose 6-phosphate contacts are provided by residues glutamate 432, arginine 460, and 466 to 469 (HVQR). 557–558 (NS) is an ATP binding site. The segment at 559 to 572 (ADHVPPSLPLEKRK) is interdomain linker. The C-terminal regulatory PFK domain 2 stretch occupies residues 573 to 941 (KIAIINVGAP…SDMLSGRTSL (369 aa)). Beta-D-fructose 2,6-bisphosphate contacts are provided by residues arginine 643, 701-705 (TISNN), arginine 739, 746-748 (QGG), glutamate 806, lysine 832, 838-841 (HVQQ), and arginine 918.

This sequence belongs to the phosphofructokinase type A (PFKA) family. ATP-dependent PFK group I subfamily. Eukaryotic two domain clade 'E' sub-subfamily. Heterododecamer of 4 alpha, 4 beta and 4 gamma chains. Requires Mg(2+) as cofactor.

Its subcellular location is the cytoplasm. It catalyses the reaction beta-D-fructose 6-phosphate + ATP = beta-D-fructose 1,6-bisphosphate + ADP + H(+). It functions in the pathway carbohydrate degradation; glycolysis; D-glyceraldehyde 3-phosphate and glycerone phosphate from D-glucose: step 3/4. Allosterically activated by ADP, AMP, or fructose 2,6-bisphosphate, and allosterically inhibited by ATP or citrate. Its function is as follows. Catalyzes the phosphorylation of D-fructose 6-phosphate to fructose 1,6-bisphosphate by ATP, the first committing step of glycolysis. The sequence is that of ATP-dependent 6-phosphofructokinase subunit beta (PFK2) from Komagataella pastoris (Yeast).